Reading from the N-terminus, the 325-residue chain is Fe-S cluster assembly protein DRE2 (325 aa).

The interval 1 to 169 (MTLGDRLGLI…KKKDAGNNEQ (169 aa)) is N-terminal SAM-like domain. Residues 170 to 222 (VVKLSVEDVEDDLDDDPEVSNELLSKAKFFNSLSLNQDAEIDENNLIKSTDGD) form a linker region. [2Fe-2S] cluster-binding residues include Cys229, Cys240, Cys243, and Cys245. Residues 229-245 (CGKTNTKKRRACKDCTC) form a fe-S binding site A region. Residues Cys288, Cys291, Cys299, and Cys302 each contribute to the [4Fe-4S] cluster site. Short sequence motifs (cx2C motif) lie at residues 288–291 (CGSC) and 299–302 (CSGC). Positions 288-302 (CGSCSLGDAFRCSGC) are fe-S binding site B.

Belongs to the anamorsin family. Monomer. Interacts with TAH18. Interacts with MIA40. [2Fe-2S] cluster is required as a cofactor. [4Fe-4S] cluster serves as cofactor.

Its subcellular location is the cytoplasm. It localises to the mitochondrion intermembrane space. Component of the cytosolic iron-sulfur (Fe-S) protein assembly (CIA) machinery required for the maturation of extramitochondrial Fe-S proteins. Part of an electron transfer chain functioning in an early step of cytosolic Fe-S biogenesis, facilitating the de novo assembly of a [4Fe-4S] cluster on the scaffold complex CFD1-NBP35. Electrons are transferred to DRE2 from NADPH via the FAD- and FMN-containing protein TAH18. TAH18-DRE2 are also required for the assembly of the diferric tyrosyl radical cofactor of ribonucleotide reductase (RNR), probably by providing electrons for reduction during radical cofactor maturation in the catalytic small subunit RNR2. The chain is Fe-S cluster assembly protein DRE2 from Vanderwaltozyma polyspora (strain ATCC 22028 / DSM 70294 / BCRC 21397 / CBS 2163 / NBRC 10782 / NRRL Y-8283 / UCD 57-17) (Kluyveromyces polysporus).